The following is a 331-amino-acid chain: Vitamin B12 import system permease protein BtuC (331 aa).

9 helical membrane passes run 20–42, 62–84, 91–113, 117–136, 148–170, 190–209, 240–262, 277–296, and 303–325; these read VMLA…FLSP, LVAA…VLLG, GVLG…LPVM, TVFM…ILVG, MLLV…FYFS, SWHH…WLCL, LAIS…VGLV, FLLP…SDIW, and SAEL…WMLI.

This sequence belongs to the binding-protein-dependent transport system permease family. FecCD subfamily. The complex is composed of two ATP-binding proteins (BtuD), two transmembrane proteins (BtuC) and a solute-binding protein (BtuF).

The protein resides in the cell inner membrane. Its function is as follows. Part of the ABC transporter complex BtuCDF involved in vitamin B12 import. Involved in the translocation of the substrate across the membrane. This is Vitamin B12 import system permease protein BtuC from Vibrio vulnificus (strain CMCP6).